The sequence spans 475 residues: Protein trichome birefringence-like 6 (475 aa).

Residues 14–34 (VLAFIITIISSAIVFFTFFSS) traverse the membrane as a helical; Signal-anchor for type II membrane protein segment. The GDS motif signature appears at 211–213 (GDS). The short motif at 450–464 (DCSHWCLPGVPDTWN) is the DCXHWCLPGXXDXWN motif element.

The protein belongs to the PC-esterase family. TBL subfamily.

The protein resides in the membrane. In terms of biological role, may act as a bridging protein that binds pectin and other cell wall polysaccharides. Probably involved in maintaining esterification of pectins. May be involved in the specific O-acetylation of cell wall polymers. The chain is Protein trichome birefringence-like 6 (TBL6) from Arabidopsis thaliana (Mouse-ear cress).